The chain runs to 162 residues: Chemoreceptor glutamine deamidase CheD (162 aa).

Belongs to the CheD family. Forms a complex with CheC.

It catalyses the reaction L-glutaminyl-[protein] + H2O = L-glutamyl-[protein] + NH4(+). Its function is as follows. Deamidates glutamine residues to glutamate on methyl-accepting chemotaxis receptors (MCPs). CheD-mediated MCP deamidation is required for productive communication of the conformational signals of the chemoreceptors to the CheA kinase. The protein is Chemoreceptor glutamine deamidase CheD of Halalkalibacterium halodurans (strain ATCC BAA-125 / DSM 18197 / FERM 7344 / JCM 9153 / C-125) (Bacillus halodurans).